The sequence spans 140 residues: ATP synthase epsilon chain (140 aa).

This sequence belongs to the ATPase epsilon chain family. In terms of assembly, F-type ATPases have 2 components, CF(1) - the catalytic core - and CF(0) - the membrane proton channel. CF(1) has five subunits: alpha(3), beta(3), gamma(1), delta(1), epsilon(1). CF(0) has three main subunits: a, b and c.

The protein resides in the cell membrane. Produces ATP from ADP in the presence of a proton gradient across the membrane. This chain is ATP synthase epsilon chain, found in Baumannia cicadellinicola subsp. Homalodisca coagulata.